The sequence spans 5635 residues: Hemicentin-1 (5635 aa).

The first 21 residues, 1-21, serve as a signal peptide directing secretion; that stretch reads MISWEVVHTVFLFALLYSSLA. A VWFA domain is found at 41–216; it reads TLAFVFDVTG…EVLKWVEEAV (176 aa). 2 N-linked (GlcNAc...) asparagine glycosylation sites follow: N349 and N390. Ig-like C2-type domains lie at 431–517, 520–607, 612–697, 702–788, 793–883, 890–976, 981–1067, 1072–1166, 1171–1255, 1262–1354, 1358–1447, 1452–1541, 1546–1634, 1638–1724, 1733–1821, 1826–1914, 1919–2007, 2012–2097, 2104–2190, 2195–2285, 2290–2379, 2384–2470, 2478–2564, 2571–2662, 2666–2763, 2766–2864, 2868–2959, 2964–3051, 3056–3146, 3151–3240, 3245–3335, 3340–3429, 3434–3516, 3527–3615, 3620–3708, 3713–3797, 3804–3892, 3897–3983, 3988–4076, 4079–4164, 4169–4255, 4260–4344, 4348–4435, and 4440–4527; these read PKVT…FDVS, PPVI…VFLT, PKVT…STLR, PKLM…ITLD, PVFI…TTVT, PLIG…TSVV, PTIQ…VQLT, PRVF…VKLN, PKIQ…TEIT, PTVE…YNLK, PPVI…FNID, PTII…IKLT, PSIK…FHVD, PPMI…KEIK, PAIE…FEVT, PTIK…IQLH, PSLE…YSLQ, PSIS…RDID, PNIM…YNVN, PNIG…YNLQ, PTIT…YDLS, PSII…RKIF, PHIV…RSFS, PTIA…YEVK, PPII…VNIQ, PSFQ…YDVR, PPII…FNLN, PSVI…FSLT, PSIK…FHLN, PSIE…YFLS, PSVA…FNLN, PTIR…YNLQ, PNMD…GEVS, PHIN…YLVR, PNIA…FILT, PNIK…RRID, PSIA…VDLT, PSIA…VTLH, PVIQ…LNVQ, PVIS…TKLT, PRIR…VSLT, PTFT…GFVY, PPVF…MSLT, and PIIT…VIVQ. An intrachain disulfide couples C451 to C499. N-linked (GlcNAc...) asparagine glycosylation is found at N528, N550, N573, and N620. C541 and C591 form a disulfide bridge. C633 and C681 are disulfide-bonded. Residue N693 is glycosylated (N-linked (GlcNAc...) asparagine). Cysteines 723 and 772 form a disulfide. N-linked (GlcNAc...) asparagine glycosylation occurs at N809. Cystine bridges form between C814/C867 and C911/C960. Residue N970 is glycosylated (N-linked (GlcNAc...) asparagine). Cystine bridges form between C1002/C1051 and C1101/C1150. N1158 carries an N-linked (GlcNAc...) asparagine glycan. C1192 and C1241 form a disulfide bridge. A glycan (N-linked (GlcNAc...) asparagine) is linked at N1272. Residues C1288 and C1338 are joined by a disulfide bond. The N-linked (GlcNAc...) asparagine glycan is linked to N1369. Disulfide bonds link C1382-C1431 and C1475-C1525. N-linked (GlcNAc...) asparagine glycosylation is present at N1552. 4 disulfide bridges follow: C1569–C1618, C1663–C1712, C1756–C1805, and C1848–C1898. A glycan (N-linked (GlcNAc...) asparagine) is linked at N1929. Cystine bridges form between C1942-C1991 and C2033-C2083. 2 N-linked (GlcNAc...) asparagine glycosylation sites follow: N2112 and N2155. Disulfide bonds link C2125–C2174, C2218–C2269, and C2314–C2363. N-linked (GlcNAc...) asparagine glycosylation is present at N2395. 3 cysteine pairs are disulfide-bonded: C2408–C2457, C2501–C2550, and C2597–C2646. A glycan (N-linked (GlcNAc...) asparagine) is linked at N2689. Intrachain disulfides connect C2696–C2745 and C2799–C2848. N-linked (GlcNAc...) asparagine glycosylation occurs at N2887. C2894 and C2943 form a disulfide bridge. N2973 carries N-linked (GlcNAc...) asparagine glycosylation. 6 disulfides stabilise this stretch: C2986/C3035, C3081/C3130, C3173/C3224, C3268/C3319, C3364/C3413, and C3457/C3506. Residues N3221 and N3300 are each glycosylated (N-linked (GlcNAc...) asparagine). An N-linked (GlcNAc...) asparagine glycan is attached at N3530. 2 cysteine pairs are disulfide-bonded: C3550/C3599 and C3643/C3692. Residues N3689 and N3727 are each glycosylated (N-linked (GlcNAc...) asparagine). C3734 and C3783 form a disulfide bridge. N-linked (GlcNAc...) asparagine glycosylation occurs at N3812. 26 cysteine pairs are disulfide-bonded: C3825–C3876, C3918–C3967, C4009–C4058, C4100–C4148, C4190–C4239, C4281–C4328, C4371–C4419, C4461–C4509, C4541–C4578, C4545–C4583, C4556–C4568, C4598–C4635, C4602–C4640, C4613–C4625, C4655–C4692, C4659–C4697, C4670–C4682, C4712–C4749, C4716–C4754, C4727–C4739, C4769–C4806, C4773–C4811, C4784–C4796, C4826–C4863, C4830–C4868, and C4841–C4853. N4029 is a glycosylation site (N-linked (GlcNAc...) asparagine). Residues N4401 and N4491 are each glycosylated (N-linked (GlcNAc...) asparagine). TSP type-1 domains follow at residues 4529–4584, 4586–4641, 4643–4698, 4700–4755, 4757–4812, and 4814–4869; these read HGGF…KPCP, DGSW…RPCP, HGAW…RNCP, HGKW…DPCP, HGNW…DMCP, and DGSW…QACP. The N-linked (GlcNAc...) asparagine glycan is linked to N4606. The Nidogen G2 beta-barrel domain occupies 4871–5093; it reads GPQRARGSVI…SKGDRSNQCP (223 aa). N4894 and N5040 each carry an N-linked (GlcNAc...) asparagine glycan. The 40-residue stretch at 5107–5146 folds into the EGF-like 1; calcium-binding domain; that stretch reads DEDECAAGNPCSHSCHNAMGTYYCSCPKGLTIAADGRTCQ. Cystine bridges form between C5111–C5121, C5117–C5130, and C5132–C5145. An EGF-like 2; calcium-binding domain is found at 5147–5191; the sequence is DIDECALGRHTCHAGQDCDNTIGSYRCVVRCGSGFRRTSDGLSCQ. In terms of domain architecture, EGF-like 3; calcium-binding spans 5192-5229; it reads DINECQESSPCHQRCFNAIGSFHCGCEPGYQLKGRKCM. 3 disulfides stabilise this stretch: C5196–C5206, C5202–C5215, and C5217–C5228. Residues 5230-5271 form the EGF-like 4; calcium-binding domain; the sequence is DVNECRQNVCRPDQHCKNTRGGYKCIDLCPNGMTKAENGTCI. A glycan (N-linked (GlcNAc...) asparagine) is linked at N5267. The EGF-like 5; calcium-binding domain occupies 5272-5307; sequence DIDECKDGTHQCRYNQICENTRGSYRCVCPRGYRSQ. Disulfide bonds link C5276-C5289, C5283-C5298, C5319-C5330, C5326-C5339, C5341-C5354, C5436-C5446, C5442-C5455, and C5457-C5470. The region spanning 5315–5355 is the EGF-like 6; calcium-binding domain; sequence DINECEQVPKPCAHQCSNTPGSFKCICPPGQHLLGDGKSCA. The 40-residue stretch at 5432-5471 folds into the EGF-like 7; calcium-binding domain; it reads DIDECENTDACQHECKNTFGSYQCICPPGYQLTHNGKTCQ. N-linked (GlcNAc...) asparagine glycosylation is present at N5615.

Expressed in hair follicles and in the dermis (at protein level). As to expression, expressed in skin fibroblasts and retinal pigment epithelium (RPE) cells.

It localises to the secreted. The protein resides in the extracellular space. The protein localises to the extracellular matrix. It is found in the basement membrane. Its subcellular location is the cytoplasm. It localises to the cell junction. The protein resides in the cleavage furrow. Its function is as follows. Involved in transforming growth factor beta-mediated rearrangement of the podocyte cytoskeleton which includes reduction of F-actin fibers and broadening, flattening and elongation of podocytes. Plays a role in basement membrane organization. May promote cleavage furrow maturation during cytokinesis in preimplantation embryos. May play a role in the architecture of adhesive and flexible epithelial cell junctions. May play a role during myocardial remodeling by imparting an effect on cardiac fibroblast migration. This chain is Hemicentin-1 (HMCN1), found in Homo sapiens (Human).